A 373-amino-acid chain; its full sequence is 3 beta-hydroxysteroid dehydrogenase/Delta 5--&gt;4-isomerase type 6 (373 aa).

The Proton acceptor role is filled by Tyr155. Lys159 is a binding site for NAD(+). The helical transmembrane segment at 288 to 308 (VPLLYWLAFMLETVSFLLSPI) threads the bilayer.

Belongs to the 3-beta-HSD family. Expressed in skin and testis.

It localises to the endoplasmic reticulum membrane. The protein localises to the mitochondrion membrane. The enzyme catalyses a 3beta-hydroxy-Delta(5)-steroid + NAD(+) = a 3-oxo-Delta(5)-steroid + NADH + H(+). It catalyses the reaction a 3-oxo-Delta(5)-steroid = a 3-oxo-Delta(4)-steroid. It functions in the pathway lipid metabolism; steroid biosynthesis. Its function is as follows. 3-beta-HSD is a bifunctional enzyme, that catalyzes the oxidative conversion of Delta(5)-ene-3-beta-hydroxy steroid, and the oxidative conversion of ketosteroids. The 3-beta-HSD enzymatic system plays a crucial role in the biosynthesis of all classes of hormonal steroids. May be involved in local production of progesterone. This chain is 3 beta-hydroxysteroid dehydrogenase/Delta 5--&gt;4-isomerase type 6 (Hsd3b6), found in Mus musculus (Mouse).